Here is a 105-residue protein sequence, read N- to C-terminus: uncharacterized protein (105 aa).

Belongs to the EspC family.

In terms of biological role, may be involved in assembly of the ESX-1 / type VII specialized secretion system (T7SS), which exports several proteins including EsxA and EsxB. Involved in DNA conjugation, in at least recipient strain. This is an uncharacterized protein from Mycolicibacterium smegmatis (strain MKD8) (Mycobacterium smegmatis).